We begin with the raw amino-acid sequence, 143 residues long: Nucleoside diphosphate kinase (143 aa).

The ATP site is built by lysine 11, phenylalanine 59, arginine 87, threonine 93, arginine 104, and asparagine 114. Residue histidine 117 is the Pros-phosphohistidine intermediate of the active site.

It belongs to the NDK family. As to quaternary structure, homotetramer. It depends on Mg(2+) as a cofactor.

Its subcellular location is the cytoplasm. It carries out the reaction a 2'-deoxyribonucleoside 5'-diphosphate + ATP = a 2'-deoxyribonucleoside 5'-triphosphate + ADP. It catalyses the reaction a ribonucleoside 5'-diphosphate + ATP = a ribonucleoside 5'-triphosphate + ADP. Major role in the synthesis of nucleoside triphosphates other than ATP. The ATP gamma phosphate is transferred to the NDP beta phosphate via a ping-pong mechanism, using a phosphorylated active-site intermediate. This Azotobacter vinelandii (strain DJ / ATCC BAA-1303) protein is Nucleoside diphosphate kinase.